The primary structure comprises 1013 residues: NHS-like protein 3 (1013 aa).

K17 carries the post-translational modification Phosphoserine. A disordered region spans residues 20-195 (SAKAESDNRQ…PPGSRDAVRI (176 aa)). Basic and acidic residues predominate over residues 73–89 (QHQERQKLSKGGWDHGD). Composition is skewed to polar residues over residues 90–99 (TQSIQSSQTG) and 106–120 (SIYSQKSYMTESSTA). S92 carries the phosphoserine modification. The residue at position 108 (Y108) is a Phosphotyrosine. 3 positions are modified to phosphoserine: S136, S143, and S159. T160 carries the post-translational modification Phosphothreonine. Basic and acidic residues predominate over residues 168–178 (VQKELGLRNNR). S213 bears the Phosphoserine mark. R318 is subject to Asymmetric dimethylarginine. A phosphoserine mark is found at S320, S325, S328, S336, S337, S339, and S340. The interval 330–1013 (RSLGRFSSAS…PGSDPQKKLV (684 aa)) is disordered. Positions 336–361 (SSASSPRPRSRNASSSSDNWSHSQSS) are enriched in low complexity. Over residues 362–375 (ETIVSDGSTLSSKG) the composition is skewed to polar residues. Phosphoserine is present on residues S398, S402, and S407. A compositionally biased stretch (polar residues) spans 408-427 (TAETSDTASIRSSGQLSGRS). 2 stretches are compositionally biased toward low complexity: residues 484–493 (VGAVSCPPSS) and 515–530 (RTLSPSSGYSSQSGTP). At T529 the chain carries Phosphothreonine. S543 is modified (phosphoserine). A compositionally biased stretch (low complexity) spans 564-577 (SVSSSLTSLCSSSS). A Phosphothreonine modification is found at T591. Over residues 600-614 (PPHPKVPAPFSPPPS) the composition is skewed to pro residues. S610 is subject to Phosphoserine. Residues 615–633 (KSKSSNQAAPVLAAPAVAP) show a composition bias toward low complexity. Residues 635-657 (QVSTIDTSPASPSMPQTTLTPAQ) show a composition bias toward polar residues. S667 and S671 each carry phosphoserine. Pro residues-rich tracts occupy residues 668-683 (PPPSPPPSYHPPPPPT) and 706-716 (PSWPPPPPPAP). Basic and acidic residues predominate over residues 779–795 (PQKDSVGKHSGAPREDS). The segment covering 814–829 (GASTGIPNPSPGSSAP) has biased composition (polar residues). 3 positions are modified to phosphoserine: S838, S842, and S848. Positions 859 to 873 (ASSLAASESPASALP) are enriched in low complexity. Phosphoserine is present on residues S909, S952, and S959. Positions 942–961 (KAPPPVARKPSVGVPPPSPS) are enriched in pro residues. Residues 964-975 (RTESLTAPSTNG) show a composition bias toward polar residues.

In terms of biological role, able to directly activate the TNF-NFkappaB signaling pathway. This Mus musculus (Mouse) protein is NHS-like protein 3 (Nhsl3).